Consider the following 1040-residue polypeptide: Multidrug resistance protein MdtB (1040 aa).

11 consecutive transmembrane segments (helical) span residues 15-37, 345-362, 367-389, 396-418, 438-460, 472-494, 535-557, 867-889, 909-931, 968-990, and 1000-1022; these read LFIM…GIIG, FELM…YLFL, ATII…MVFL, LTLM…VIEN, GEIG…PLLF, FAIT…TPMM, HPWL…WVFI, VWLI…ESFI, LMIA…IGIV, ILMT…GVGA, and MVGG…YLLF.

Belongs to the resistance-nodulation-cell division (RND) (TC 2.A.6) family. MdtB subfamily. As to quaternary structure, part of a tripartite efflux system composed of MdtA, MdtB and MdtC. MdtB forms a heteromultimer with MdtC.

It is found in the cell inner membrane. Its function is as follows. The MdtABC tripartite complex confers resistance against novobiocin and deoxycholate. This is Multidrug resistance protein MdtB from Escherichia coli O157:H7.